We begin with the raw amino-acid sequence, 388 residues long: Homeobox protein XHOX-3 (388 aa).

2 disordered regions span residues 30–109 (AVGS…SDFY) and 131–163 (SAGQ…FSAC). Polar residues-rich tracts occupy residues 68 to 81 (ATGQ…QLRI) and 91 to 103 (DSLS…SSSD). Positions 168 to 227 (MRRYRTAFTREQIARLEKEFYRENYVSRPRRCELAAALNLPETTIKVWFQNRRMKDKRQR) form a DNA-binding region, homeobox.

The protein belongs to the even-skipped homeobox family.

It localises to the nucleus. May be required for posterior development and development of normal embryonic axial pattern. The sequence is that of Homeobox protein XHOX-3 (xhox3) from Xenopus laevis (African clawed frog).